The chain runs to 317 residues: Ubiquinone biosynthesis protein COQ9, mitochondrial (317 aa).

Residues 1–46 constitute a mitochondrion transit peptide; that stretch reads MAASVARVLKAAGGRQLLLMVARRRPVLRQPFLLMPRKFWGTSALR. Residues 45–97 are disordered; sequence LRSEDQKQPPFSSTSAHAGTPEHAEEQYQQQQPPPRYTDQAGEESEGYESEEQ. A compositionally biased stretch (acidic residues) spans 85 to 96; sequence AGEESEGYESEE. A 1,2-diacylglycero-3-phosphoethanolamine is bound at residue Arg-243.

This sequence belongs to the COQ9 family. Homodimer. Heterodimer; two heterodimers of COQ7:COQ9 come together on the same side of the lipid pseudo-bilayer and form a curved tetramer with a hydrophobic surface suitable for membrane interaction. These two tetramers assemble into a soluble octamer with a pseudo-bilayer of lipids captured within. Interacts with COQ7; this interaction allows ubiquinone (CoQ) isoprene intermediates presentation to COQ7 and facilitates the COQ7-mediated hydroxylase step.

It localises to the mitochondrion. Its pathway is cofactor biosynthesis; ubiquinone biosynthesis. Its function is as follows. Membrane-associated protein that warps the membrane surface to access and bind aromatic isoprenes with high specificity, including ubiquinone (CoQ) isoprene intermediates and presents them directly to COQ7, therefore facilitating the COQ7-mediated hydroxylase step. Participates in the biosynthesis of coenzyme Q, also named ubiquinone, an essential lipid-soluble electron transporter for aerobic cellular respiration. The sequence is that of Ubiquinone biosynthesis protein COQ9, mitochondrial from Xenopus tropicalis (Western clawed frog).